The primary structure comprises 459 residues: Bifunctional protein GlmU (459 aa).

Positions 1–230 (MSNRFAVILA…FDETLGVNDR (230 aa)) are pyrophosphorylase. UDP-N-acetyl-alpha-D-glucosamine contacts are provided by residues 9 to 12 (LAAG), K23, Q73, and 78 to 79 (GT). A Mg(2+)-binding site is contributed by D103. UDP-N-acetyl-alpha-D-glucosamine is bound by residues G140, E155, N170, and N228. N228 serves as a coordination point for Mg(2+). The linker stretch occupies residues 231–251 (VALSQAEIIMKNRINRKNMVN). Residues 252–459 (GVTIIDPSNT…VDQLLNKKKS (208 aa)) are N-acetyltransferase. Residues R333 and K351 each coordinate UDP-N-acetyl-alpha-D-glucosamine. H363 acts as the Proton acceptor in catalysis. UDP-N-acetyl-alpha-D-glucosamine contacts are provided by Y366 and N377. Acetyl-CoA contacts are provided by residues 386-387 (NY), A423, and R440.

The protein in the N-terminal section; belongs to the N-acetylglucosamine-1-phosphate uridyltransferase family. This sequence in the C-terminal section; belongs to the transferase hexapeptide repeat family. As to quaternary structure, homotrimer. Mg(2+) serves as cofactor.

Its subcellular location is the cytoplasm. It catalyses the reaction alpha-D-glucosamine 1-phosphate + acetyl-CoA = N-acetyl-alpha-D-glucosamine 1-phosphate + CoA + H(+). The catalysed reaction is N-acetyl-alpha-D-glucosamine 1-phosphate + UTP + H(+) = UDP-N-acetyl-alpha-D-glucosamine + diphosphate. It participates in nucleotide-sugar biosynthesis; UDP-N-acetyl-alpha-D-glucosamine biosynthesis; N-acetyl-alpha-D-glucosamine 1-phosphate from alpha-D-glucosamine 6-phosphate (route II): step 2/2. The protein operates within nucleotide-sugar biosynthesis; UDP-N-acetyl-alpha-D-glucosamine biosynthesis; UDP-N-acetyl-alpha-D-glucosamine from N-acetyl-alpha-D-glucosamine 1-phosphate: step 1/1. Its pathway is bacterial outer membrane biogenesis; LPS lipid A biosynthesis. In terms of biological role, catalyzes the last two sequential reactions in the de novo biosynthetic pathway for UDP-N-acetylglucosamine (UDP-GlcNAc). The C-terminal domain catalyzes the transfer of acetyl group from acetyl coenzyme A to glucosamine-1-phosphate (GlcN-1-P) to produce N-acetylglucosamine-1-phosphate (GlcNAc-1-P), which is converted into UDP-GlcNAc by the transfer of uridine 5-monophosphate (from uridine 5-triphosphate), a reaction catalyzed by the N-terminal domain. This Bacillus cereus (strain G9842) protein is Bifunctional protein GlmU.